We begin with the raw amino-acid sequence, 687 residues long: Protein SDA1 homolog (687 aa).

Ser-232, Ser-234, and Ser-236 each carry phosphoserine. Positions 254 to 315 (KKGSKNKKKL…SCKERFEVKM (62 aa)) form a coiled coil. The disordered stretch occupies residues 484–509 (LEKGENTEDDEDGWESASLSEEEEED). Residues 490-509 (TEDDEDGWESASLSEEEEED) show a composition bias toward acidic residues. Thr-552 is subject to Phosphothreonine. A phosphoserine mark is found at Ser-585, Ser-589, and Ser-595. Residues 604–651 (KKPKSDKETRLATAMAGRTDRKEFVRKKTKINPFSSSTNKEKKKQKNF) are disordered.

It belongs to the SDA1 family.

Its subcellular location is the nucleus. It localises to the nucleolus. Its function is as follows. Required for 60S pre-ribosomal subunits export to the cytoplasm. The sequence is that of Protein SDA1 homolog (Sdad1) from Mus musculus (Mouse).